We begin with the raw amino-acid sequence, 161 residues long: Putative pre-16S rRNA nuclease (161 aa).

Belongs to the YqgF nuclease family.

The protein resides in the cytoplasm. Functionally, could be a nuclease involved in processing of the 5'-end of pre-16S rRNA. In Methylocella silvestris (strain DSM 15510 / CIP 108128 / LMG 27833 / NCIMB 13906 / BL2), this protein is Putative pre-16S rRNA nuclease.